The following is a 72-amino-acid chain: UPF0270 protein YheU (72 aa).

The protein belongs to the UPF0270 family.

The protein is UPF0270 protein YheU of Shigella dysenteriae serotype 1 (strain Sd197).